A 369-amino-acid chain; its full sequence is Peptide chain release factor 1 (369 aa).

Gln234 bears the N5-methylglutamine mark.

It belongs to the prokaryotic/mitochondrial release factor family. In terms of processing, methylated by PrmC. Methylation increases the termination efficiency of RF1.

The protein localises to the cytoplasm. Its function is as follows. Peptide chain release factor 1 directs the termination of translation in response to the peptide chain termination codons UAG and UAA. This is Peptide chain release factor 1 from Kocuria rhizophila (strain ATCC 9341 / DSM 348 / NBRC 103217 / DC2201).